The chain runs to 419 residues: Inner ear-specific collagen (419 aa).

The signal sequence occupies residues 1 to 19; sequence MDAYSLSPTDSTTYSSDTF. Residues 20 to 57 are nonhelical region (NC2); the sequence is STEFHTDAIAPPGNTPGNYTLDYNECFFNFCECCPPEK. Asn37 carries an N-linked (GlcNAc...) asparagine glycan. A triple-helical region (COL1) region spans residues 58-274; the sequence is GPMGPMGERG…RGPKGPPGES (217 aa). The tract at residues 63–275 is disordered; that stretch reads MGERGLPGPP…GPKGPPGESV (213 aa). Composition is skewed to basic and acidic residues over residues 129–144 and 184–202; these read PGEK…KGER and LKGE…KGER. The span at 227-236 shows a compositional bias: gly residues; that stretch reads GPLGGKGDTG. Positions 275-412 constitute a C1q domain; it reads VEQIRSAFSV…GFLLYPDTKK (138 aa). The nonhelical region (NC1) stretch occupies residues 275-419; it reads VEQIRSAFSV…TKKPTAMENL (145 aa). Residue Asn320 is glycosylated (N-linked (GlcNAc...) asparagine).

Specialized secretory supporting cells at the outer perimeter of the saccular epithelium.

It is found in the secreted. Its subcellular location is the extracellular space. It localises to the extracellular matrix. Functionally, forms a microstructural matrix within the otolithic membrane. In Lepomis macrochirus (Bluegill), this protein is Inner ear-specific collagen.